We begin with the raw amino-acid sequence, 164 residues long: 17.8 kDa class II heat shock protein (164 aa).

The sHSP domain maps to 48-164 (DARAMAATPA…KPKTIEVKVA (117 aa)).

It belongs to the small heat shock protein (HSP20) family.

The protein resides in the cytoplasm. This is 17.8 kDa class II heat shock protein from Zea mays (Maize).